Here is a 121-residue protein sequence, read N- to C-terminus: Small ribosomal subunit protein uS13 (121 aa).

Positions 92-121 (RKGLPCRGQRTRTNARTRKGPRKAAQSLKK) are disordered.

This sequence belongs to the universal ribosomal protein uS13 family. Part of the 30S ribosomal subunit. Forms a loose heterodimer with protein S19. Forms two bridges to the 50S subunit in the 70S ribosome.

Located at the top of the head of the 30S subunit, it contacts several helices of the 16S rRNA. In the 70S ribosome it contacts the 23S rRNA (bridge B1a) and protein L5 of the 50S subunit (bridge B1b), connecting the 2 subunits; these bridges are implicated in subunit movement. Contacts the tRNAs in the A and P-sites. In Janthinobacterium sp. (strain Marseille) (Minibacterium massiliensis), this protein is Small ribosomal subunit protein uS13.